Reading from the N-terminus, the 443-residue chain is COP9 signalosome complex subunit 2 (443 aa).

Residues 254–416 (AHTDFFEAFK…QLLELDHQKR (163 aa)) enclose the PCI domain.

This sequence belongs to the CSN2 family. Component of the CSN complex, probably composed of cops1, cops2, cops3, cops4, cops5, cops6, cops7, cops8 and cops9.

Its subcellular location is the cytoplasm. The protein localises to the nucleus. Essential component of the COP9 signalosome complex (CSN), a complex involved in various cellular and developmental processes. The CSN complex is an essential regulator of the ubiquitin (Ubl) conjugation pathway by mediating the deneddylation of the cullin subunits of E3 ligase complexes, leading to modify the Ubl ligase activity. This is COP9 signalosome complex subunit 2 (cops2) from Danio rerio (Zebrafish).